We begin with the raw amino-acid sequence, 90 residues long: Probable Fe(2+)-trafficking protein (90 aa).

This sequence belongs to the Fe(2+)-trafficking protein family.

Functionally, could be a mediator in iron transactions between iron acquisition and iron-requiring processes, such as synthesis and/or repair of Fe-S clusters in biosynthetic enzymes. The protein is Probable Fe(2+)-trafficking protein of Leptothrix cholodnii (strain ATCC 51168 / LMG 8142 / SP-6) (Leptothrix discophora (strain SP-6)).